The following is a 276-amino-acid chain: MAIRSYRTYTPSTRNRPISSYDGRVRSNPQKKLTSGQHRCGKGRNSRGIITARHRGGGHKRLYRQIDFQRNEKYIFGEIVTIEYDPNRSAYICLVHYGDGEKKYILHPRGVIIGDTITSGPRAPISIGNALPLTDVPLGTAIHSIEITLGKGGQLARAAGAVAELIAKEGRSTTLRLPSGEIRLISENCSATIGQVGNVNANNGTLGKAGSKRWLGKRPRVRGVVMNPVDHPHGGGEGRTPIGRKKPVTPWGYAALGRKSRKNNKYSDASILRRRK.

Disordered stretches follow at residues 1–51 and 224–276; these read MAIR…GIIT and VVMN…RRRK. 2 stretches are compositionally biased toward polar residues: residues 7–18 and 27–37; these read RTYTPSTRNRPI and SNPQKKLTSGQ.

This sequence belongs to the universal ribosomal protein uL2 family. In terms of assembly, part of the 50S ribosomal subunit.

The protein resides in the plastid. It localises to the chloroplast. This chain is Large ribosomal subunit protein uL2c (rpl2), found in Cycas taitungensis (Prince sago).